The sequence spans 369 residues: 3-dehydroquinate synthase (369 aa).

Residues 78-83 (DGERYK), 112-116 (GVIGD), 136-137 (TT), K149, K158, and 176-179 (TLTT) each bind NAD(+). Zn(2+)-binding residues include E191, H254, and H271.

This sequence belongs to the sugar phosphate cyclases superfamily. Dehydroquinate synthase family. The cofactor is NAD(+). Requires Co(2+) as cofactor. It depends on Zn(2+) as a cofactor.

The protein resides in the cytoplasm. The enzyme catalyses 7-phospho-2-dehydro-3-deoxy-D-arabino-heptonate = 3-dehydroquinate + phosphate. It participates in metabolic intermediate biosynthesis; chorismate biosynthesis; chorismate from D-erythrose 4-phosphate and phosphoenolpyruvate: step 2/7. Catalyzes the conversion of 3-deoxy-D-arabino-heptulosonate 7-phosphate (DAHP) to dehydroquinate (DHQ). The protein is 3-dehydroquinate synthase of Nitrosomonas europaea (strain ATCC 19718 / CIP 103999 / KCTC 2705 / NBRC 14298).